A 215-amino-acid polypeptide reads, in one-letter code: Glutathione S-transferase-like protein (215 aa).

Residues 1–76 form the GST N-terminal domain; the sequence is MPNARILKIQ…YVAASGPAAP (76 aa). The GST C-terminal domain occupies 82–215; it reads NVAEQAAVRQ…LVAVRKEASV (134 aa).

It belongs to the GST superfamily.

The polypeptide is Glutathione S-transferase-like protein (Aspergillus aculeatus (strain ATCC 16872 / CBS 172.66 / WB 5094)).